The primary structure comprises 858 residues: Ubiquitin carboxyl-terminal hydrolase 5 (858 aa).

Position 2 is an N-acetylalanine (alanine 2). Positions 73 to 98 (LRRTRRPKEEDTSAGTGDPPRKKPTR) are disordered. Residue lysine 113 forms a Glycyl lysine isopeptide (Lys-Gly) (interchain with G-Cter in SUMO) linkage. Phosphoserine is present on residues serine 149 and serine 156. Residues 175-283 (QVSKHAFNLK…EHLSHFGIDM (109 aa)) form a UBP-type; degenerate zinc finger. The cysteines at positions 195 and 816 are disulfide-linked. The Zn(2+) site is built by cysteine 199 and cysteine 202. A substrate-binding site is contributed by tryptophan 209. Position 219 (cysteine 219) interacts with Zn(2+). 221 to 224 (RRYF) serves as a coordination point for substrate. Histidine 232 serves as a coordination point for Zn(2+). Residues tyrosine 259, tyrosine 261, and aspartate 264 each contribute to the substrate site. Position 292 is a phosphothreonine (threonine 292). Residues 326-856 (TGIRNLGNSC…LGYIYFYQRV (531 aa)) form the USP domain. Cysteine 335 serves as the catalytic Nucleophile. Threonine 623 is subject to Phosphothreonine. UBA domains follow at residues 654–695 (MLDE…VMSH) and 722–762 (PPPE…IFSH). 3 positions are modified to phosphoserine: serine 779, serine 783, and serine 785. Histidine 818 acts as the Proton acceptor in catalysis.

Belongs to the peptidase C19 family. In terms of assembly, homodimer. Interacts with TRIML1. In terms of processing, SUMOylated at Lys-113; SUMOylation affects the interaction with Cav3.2 channels. Ubiquitinated by SMURF1; leading to proteasomal degradation.

The protein localises to the cytoplasm. It localises to the stress granule. The protein resides in the nucleus. It carries out the reaction Thiol-dependent hydrolysis of ester, thioester, amide, peptide and isopeptide bonds formed by the C-terminal Gly of ubiquitin (a 76-residue protein attached to proteins as an intracellular targeting signal).. Its function is as follows. Deubiquitinating enzyme that participates in a wide range of cellular processes by specifically cleaving isopeptide bonds between ubiquitin and substrate proteins or ubiquitin itself. Affects thereby important cellular signaling pathways such as NF-kappa-B, Wnt/beta-catenin, and cytokine production by regulating ubiquitin-dependent protein degradation. Participates in the activation of the Wnt signaling pathway by promoting FOXM1 deubiquitination and stabilization that induces the recruitment of beta-catenin to Wnt target gene promoter. Regulates the assembly and disassembly of heat-induced stress granules by mediating the hydrolysis of unanchored ubiquitin chains. Promotes lipopolysaccharide-induced apoptosis and inflammatory response by stabilizing the TXNIP protein. Affects T-cell biology by stabilizing the inhibitory receptor on T-cells PDC1. Acts as a negative regulator of autophagy by regulating ULK1 at both protein and mRNA levels. Acts also as a negative regulator of type I interferon production by simultaneously removing both 'Lys-48'-linked unanchored and 'Lys-63'-linked anchored polyubiquitin chains on the transcription factor IRF3. Modulates the stability of DNA mismatch repair protein MLH1 and counteracts the effect of the ubiquitin ligase UBR4. Upon activation by insulin, it gets phosphorylated through mTORC1-mediated phosphorylation to enhance YTHDF1 stability by removing 'Lys-11'-linked polyubiquitination. May also deubiquitinate other substrates such as the calcium channel CACNA1H. The protein is Ubiquitin carboxyl-terminal hydrolase 5 (Usp5) of Mus musculus (Mouse).